Here is a 190-residue protein sequence, read N- to C-terminus: Small ribosomal subunit protein uS4 (190 aa).

The S4 RNA-binding domain maps to 105 to 181 (RRLQTLVYKL…RKKAKAAEGG (77 aa)). The disordered stretch occupies residues 163 to 190 (GGGRPGRVRRKKAKAAEGGDGDAEEDEE). Acidic residues predominate over residues 181–190 (GDGDAEEDEE).

This sequence belongs to the universal ribosomal protein uS4 family.

The chain is Small ribosomal subunit protein uS4 (RPS9) from Podospora anserina (Pleurage anserina).